Reading from the N-terminus, the 466-residue chain is Purple acid phosphatase 6 (466 aa).

A signal peptide spans 1–20 (MKNLVIFAFLFLSITTVING). The N-linked (GlcNAc...) asparagine glycan is linked to Asn-88. Position 164 (Asp-164) interacts with Fe cation. Residue Asn-172 is glycosylated (N-linked (GlcNAc...) asparagine). Asp-192 and Tyr-195 together coordinate Fe cation. Asp-192 is a binding site for Zn(2+). Positions 229 and 314 each coordinate Zn(2+). Residue Asn-229 participates in substrate binding. The active-site Proton donor is the His-324. Position 351 (His-351) interacts with Zn(2+). Position 351-353 (351-353 (HVH)) interacts with substrate. A Fe cation-binding site is contributed by His-353. 2 N-linked (GlcNAc...) asparagine glycosylation sites follow: Asn-367 and Asn-424.

Belongs to the metallophosphoesterase superfamily. Purple acid phosphatase family. As to quaternary structure, homodimer. Requires Fe cation as cofactor. The cofactor is Zn(2+). Specifically expressed in flowers.

The protein localises to the secreted. The enzyme catalyses a phosphate monoester + H2O = an alcohol + phosphate. This is Purple acid phosphatase 6 (PAP6) from Arabidopsis thaliana (Mouse-ear cress).